Consider the following 271-residue polypeptide: UPF0758 protein ACIAD3126 (271 aa).

Positions 120–242 (NLNSSRLVLD…TFSFAERALL (123 aa)) constitute an MPN domain. 3 residues coordinate Zn(2+): His-191, His-193, and Asp-204. The JAMM motif signature appears at 191–204 (HNHPFGKAEPSAAD).

The protein belongs to the UPF0758 family.

This Acinetobacter baylyi (strain ATCC 33305 / BD413 / ADP1) protein is UPF0758 protein ACIAD3126.